The primary structure comprises 239 residues: Sugar fermentation stimulation protein homolog (239 aa).

The protein belongs to the SfsA family.

The polypeptide is Sugar fermentation stimulation protein homolog (Methanobrevibacter smithii (strain ATCC 35061 / DSM 861 / OCM 144 / PS)).